Reading from the N-terminus, the 336-residue chain is tRNA N6-adenosine threonylcarbamoyltransferase (336 aa).

2 residues coordinate Fe cation: histidine 112 and histidine 116. Substrate-binding positions include 136–140 (LVSGG), aspartate 169, glycine 182, and asparagine 276. Fe cation is bound at residue aspartate 304.

The protein belongs to the KAE1 / TsaD family. Requires Fe(2+) as cofactor.

It is found in the cytoplasm. The enzyme catalyses L-threonylcarbamoyladenylate + adenosine(37) in tRNA = N(6)-L-threonylcarbamoyladenosine(37) in tRNA + AMP + H(+). Required for the formation of a threonylcarbamoyl group on adenosine at position 37 (t(6)A37) in tRNAs that read codons beginning with adenine. Is involved in the transfer of the threonylcarbamoyl moiety of threonylcarbamoyl-AMP (TC-AMP) to the N6 group of A37, together with TsaE and TsaB. TsaD likely plays a direct catalytic role in this reaction. The protein is tRNA N6-adenosine threonylcarbamoyltransferase of Francisella tularensis subsp. tularensis (strain FSC 198).